Here is a 452-residue protein sequence, read N- to C-terminus: Retinoid-inducible serine carboxypeptidase (452 aa).

The signal sequence occupies residues 1–28 (MELSRRICLVRLWLLLLSFLLGFSAGSA). Asn-64, Asn-102, and Asn-126 each carry an N-linked (GlcNAc...) asparagine glycan. Ser-167 is a catalytic residue. Asn-192 and Asn-362 each carry an N-linked (GlcNAc...) asparagine glycan. Residues Asp-371 and His-431 contribute to the active site.

Belongs to the peptidase S10 family.

It localises to the secreted. Its function is as follows. May be involved in vascular wall and kidney homeostasis. In Mus musculus (Mouse), this protein is Retinoid-inducible serine carboxypeptidase (Scpep1).